The following is a 141-amino-acid chain: Protein nfe1 (141 aa).

To the N-terminal of nitrogenase iron protein (NifH). Has lost the ATP-binding site.

Its function is as follows. Responsible for the nodulation efficiency and competitive ability of strain GR4 on alfalfa roots. The chain is Protein nfe1 (nfe1) from Rhizobium meliloti (Ensifer meliloti).